We begin with the raw amino-acid sequence, 441 residues long: Dihydroorotase (441 aa).

Zn(2+)-binding residues include His-77 and His-79. Substrate-binding positions include 79–81 (HFR) and Asn-111. Zn(2+) is bound by residues Asp-167, His-194, and His-248. Asn-294 contacts substrate. Asp-321 is a binding site for Zn(2+). The active site involves Asp-321. Substrate contacts are provided by residues His-325 and 339–340 (FG).

The protein belongs to the metallo-dependent hydrolases superfamily. DHOase family. Class I DHOase subfamily. The cofactor is Zn(2+).

The catalysed reaction is (S)-dihydroorotate + H2O = N-carbamoyl-L-aspartate + H(+). The protein operates within pyrimidine metabolism; UMP biosynthesis via de novo pathway; (S)-dihydroorotate from bicarbonate: step 3/3. Functionally, catalyzes the reversible cyclization of carbamoyl aspartate to dihydroorotate. The polypeptide is Dihydroorotase (Wolbachia sp. subsp. Drosophila simulans (strain wRi)).